A 274-amino-acid polypeptide reads, in one-letter code: Thiamine kinase (274 aa).

It belongs to the thiamine kinase family.

It carries out the reaction thiamine + ATP = thiamine phosphate + ADP + H(+). It functions in the pathway cofactor biosynthesis; thiamine diphosphate biosynthesis; thiamine phosphate from thiamine: step 1/1. Functionally, catalyzes the ATP-dependent phosphorylation of thiamine to thiamine phosphate. Is involved in thiamine salvage. This chain is Thiamine kinase, found in Escherichia coli O6:K15:H31 (strain 536 / UPEC).